A 290-amino-acid polypeptide reads, in one-letter code: 33 kDa chaperonin (290 aa).

2 disulfide bridges follow: cysteine 235-cysteine 237 and cysteine 268-cysteine 271.

The protein belongs to the HSP33 family. Post-translationally, under oxidizing conditions two disulfide bonds are formed involving the reactive cysteines. Under reducing conditions zinc is bound to the reactive cysteines and the protein is inactive.

It localises to the cytoplasm. Its function is as follows. Redox regulated molecular chaperone. Protects both thermally unfolding and oxidatively damaged proteins from irreversible aggregation. Plays an important role in the bacterial defense system toward oxidative stress. This is 33 kDa chaperonin from Streptococcus pneumoniae serotype 19F (strain G54).